The primary structure comprises 76 residues: Omega-agatoxin-Aa3a (76 aa).

Intrachain disulfides connect Cys2–Cys19, Cys9–Cys25, Cys16–Cys52, Cys18–Cys40, Cys27–Cys38, and Cys59–Cys67.

It belongs to the neurotoxin 04 (omega-agtx) family. 03 (type II/III omega-agtx) subfamily. Expressed by the venom gland.

The protein resides in the secreted. Omega-agatoxin are antagonist of voltage-gated calcium channels. They block insect neuromuscular transmission presynaptically. Potent blocker of N- (Cav2.2/CACNA1B) and L-type (Cav1/CACNA1) calcium channels. In Agelenopsis aperta (North American funnel-web spider), this protein is Omega-agatoxin-Aa3a.